We begin with the raw amino-acid sequence, 167 residues long: SsrA-binding protein (167 aa).

Basic and acidic residues predominate over residues 139–158; sequence QNHDKRDAAKERDWQRDKQR. The tract at residues 139–167 is disordered; it reads QNHDKRDAAKERDWQRDKQRVMRRHNRDA.

This sequence belongs to the SmpB family.

Its subcellular location is the cytoplasm. Required for rescue of stalled ribosomes mediated by trans-translation. Binds to transfer-messenger RNA (tmRNA), required for stable association of tmRNA with ribosomes. tmRNA and SmpB together mimic tRNA shape, replacing the anticodon stem-loop with SmpB. tmRNA is encoded by the ssrA gene; the 2 termini fold to resemble tRNA(Ala) and it encodes a 'tag peptide', a short internal open reading frame. During trans-translation Ala-aminoacylated tmRNA acts like a tRNA, entering the A-site of stalled ribosomes, displacing the stalled mRNA. The ribosome then switches to translate the ORF on the tmRNA; the nascent peptide is terminated with the 'tag peptide' encoded by the tmRNA and targeted for degradation. The ribosome is freed to recommence translation, which seems to be the essential function of trans-translation. The chain is SsrA-binding protein from Xanthomonas oryzae pv. oryzae (strain MAFF 311018).